Reading from the N-terminus, the 213-residue chain is N-(5'-phosphoribosyl)anthranilate isomerase (213 aa).

This sequence belongs to the TrpF family.

It catalyses the reaction N-(5-phospho-beta-D-ribosyl)anthranilate = 1-(2-carboxyphenylamino)-1-deoxy-D-ribulose 5-phosphate. It participates in amino-acid biosynthesis; L-tryptophan biosynthesis; L-tryptophan from chorismate: step 3/5. This Hahella chejuensis (strain KCTC 2396) protein is N-(5'-phosphoribosyl)anthranilate isomerase.